The following is a 2126-amino-acid chain: Polycystin family receptor for egg jelly (2126 aa).

A signal peptide spans 1–18 (MWPGPALLLLGLGLGLGS). At 19 to 1068 (QPPPTGPRGL…AIISNLTQNP (1050 aa)) the chain is on the extracellular side. Residues 20–71 (PPPTGPRGLPGVLRGAPGLGQGAESSVRGGDTGGLSPRAAPRHASPTPPRRC) form a disordered region. 14 N-linked (GlcNAc...) asparagine glycosylation sites follow: Asn-84, Asn-94, Asn-129, Asn-192, Asn-243, Asn-325, Asn-571, Asn-761, Asn-774, Asn-807, Asn-849, Asn-888, Asn-960, and Asn-1063. Residues 102–797 (CIMQPVKINR…SMMFCEFADD (696 aa)) form the REJ domain. The chain crosses the membrane as a helical span at residues 1069–1089 (ATFLAVLFIMILYAILAFWAL). Topologically, residues 1090 to 1273 (HRDVIDLYFR…VPKPFNRLQR (184 aa)) are cytoplasmic. A PLAT domain is found at 1114–1231 (LCYLVTIFTG…TLDATFSVTN (118 aa)). A helical membrane pass occupies residues 1274–1294 (LSCCLAMLLSSLVCNIMFFNL). Topologically, residues 1295-1311 (NQKEKIESRHMHIIRSM) are extracellular. A helical transmembrane segment spans residues 1312-1332 (LIGIESVVITIPVQLLITFFF). At 1333-1449 (TYSQKNLKMN…KTQIILPRWC (117 aa)) the chain is on the cytoplasmic side. Positions 1379 to 1431 (RAAVSTSAPEEKEAFETSQKHEKADTQMSNKNSSNNNQEASEGVPPKAFSSQP) are disordered. The segment covering 1387-1403 (PEEKEAFETSQKHEKAD) has biased composition (basic and acidic residues). Residues 1450–1470 (VYIAWFLVFATSGISSFFIVF) traverse the membrane as a helical segment. Residues 1471–1483 (YGVTYGYAKSIEW) are Extracellular-facing. Residues 1484 to 1504 (LFASFCSFCQSVFLVQPCNIL) traverse the membrane as a helical segment. At 1505-1580 (LRSGTRSYKP…RRENRIRRRS (76 aa)) the chain is on the cytoplasmic side. A helical transmembrane segment spans residues 1581–1601 (FLFLSYLVTHFIFLTLLLLLI). At 1602 to 1838 (FSLRHNDSFY…DFNRKTSSEI (237 aa)) the chain is on the extracellular side. 4 N-linked (GlcNAc...) asparagine glycosylation sites follow: Asn-1607, Asn-1676, Asn-1766, and Asn-1817. A helical transmembrane segment spans residues 1839–1859 (YLYAAILIFFCAYVVDEGYII). Residues 1860-1875 (RQERASYIRSVYNLLN) lie on the Cytoplasmic side of the membrane. The helical transmembrane segment at 1876 to 1896 (FSLKCMFALLIVLFFWKYFLA) threads the bilayer. Residues 1897-1918 (TKMVQLYLADPEAFIPFHAVSR) are Extracellular-facing. Residues 1919 to 1939 (VDHFMRIILAFLLFLTILKTL) traverse the membrane as a helical segment. Residues 1940–1964 (RYSRFFYNVRLAQKAIQAALPGICH) lie on the Cytoplasmic side of the membrane. A helical membrane pass occupies residues 1965 to 1985 (TALVVSIYSFMYVAFGYLVFG). The Extracellular segment spans residues 1986-2019 (QHEWNYSNMIHATQTIFSYCVSAFQNTEFSGNKV). A helical membrane pass occupies residues 2020-2040 (LGVLFLSSFMLVMICIFINLF). Residues 2041–2126 (QAVILSAYDE…NGKKMIYLVV (86 aa)) lie on the Cytoplasmic side of the membrane.

It belongs to the polycystin family. As to expression, exclusively expressed in testis.

It localises to the cell membrane. The protein localises to the cytoplasmic vesicle. Its subcellular location is the secretory vesicle. It is found in the acrosome membrane. The protein resides in the nucleus. Functionally, testis-specific protein that controls sperm transport and the timing of zona pellucida-evoked exocytosis of the sperm acrosome. This Mus musculus (Mouse) protein is Polycystin family receptor for egg jelly (Pkdrej).